The following is a 253-amino-acid chain: Ribonuclease HII (253 aa).

An RNase H type-2 domain is found at 70 to 253; it reads NLIAGIDEVG…KSFEPIKSML (184 aa). D76, E77, and D168 together coordinate a divalent metal cation.

Belongs to the RNase HII family. Mn(2+) is required as a cofactor. Mg(2+) serves as cofactor.

It localises to the cytoplasm. The enzyme catalyses Endonucleolytic cleavage to 5'-phosphomonoester.. In terms of biological role, endonuclease that specifically degrades the RNA of RNA-DNA hybrids. This is Ribonuclease HII from Streptococcus agalactiae serotype III (strain NEM316).